Here is a 271-residue protein sequence, read N- to C-terminus: Putative pyruvate, phosphate dikinase regulatory protein (271 aa).

147–154 (GLSRTSKT) contacts ADP.

It belongs to the pyruvate, phosphate/water dikinase regulatory protein family. PDRP subfamily.

The enzyme catalyses N(tele)-phospho-L-histidyl/L-threonyl-[pyruvate, phosphate dikinase] + ADP = N(tele)-phospho-L-histidyl/O-phospho-L-threonyl-[pyruvate, phosphate dikinase] + AMP + H(+). The catalysed reaction is N(tele)-phospho-L-histidyl/O-phospho-L-threonyl-[pyruvate, phosphate dikinase] + phosphate + H(+) = N(tele)-phospho-L-histidyl/L-threonyl-[pyruvate, phosphate dikinase] + diphosphate. Bifunctional serine/threonine kinase and phosphorylase involved in the regulation of the pyruvate, phosphate dikinase (PPDK) by catalyzing its phosphorylation/dephosphorylation. This chain is Putative pyruvate, phosphate dikinase regulatory protein, found in Clostridium tetani (strain Massachusetts / E88).